A 2813-amino-acid chain; its full sequence is von Willebrand factor (2813 aa).

Residues 1 to 22 form the signal peptide; that stretch reads MIPARFAGVLLALALILPGTLC. The region spanning 33–201 is the VWFD 1 domain; that stretch reads ARCSLFGSDF…ALSSGEQWCE (169 aa). Cystine bridges form between Cys-35/Cys-162 and Cys-57/Cys-200. 3 N-linked (GlcNAc...) asparagine glycosylation sites follow: Asn-99, Asn-156, and Asn-211. Residues 295-348 form the TIL 1 domain; sequence CPAGMEYRQCVSPCARTCQSLHINEMCQERCVDGCSCPEGQLLDEGLCVESTEC. A VWFD 2 domain is found at 386–560; that stretch reads GECLVTGQSH…NAWKLHGDCQ (175 aa). 3 cysteine pairs are disulfide-bonded: Cys-388–Cys-524, Cys-410–Cys-559, and Cys-432–Cys-440. TIL domains are found at residues 652–707 and 776–827; these read CPKG…KAQC and CPAD…LERC. Asn-666 carries N-linked (GlcNAc...) asparagine glycosylation. An amino-terminal region spans residues 764–787; that stretch reads SLSCRPPMVKLVCPADNLRAEGLE. Cystine bridges form between Cys-767–Cys-808, Cys-776–Cys-804, and Cys-810–Cys-821. The E1 stretch occupies residues 788 to 833; the sequence is CTKTCQNYDLECMSMGCVSGCLCPPGMVRHENRCVALERCPCFHQG. Positions 826–853 are CX; sequence RCPCFHQGKEYAPGETVKIGCNTCVCQD. Asn-857 carries an N-linked (GlcNAc...) asparagine glycan. In terms of domain architecture, VWFD 3 spans 865–1032; sequence ATCSTIGMAH…NSWKVSSQCA (168 aa). Disulfide bonds link Cys-867/Cys-996, Cys-889/Cys-1031, Cys-898/Cys-993, Cys-914/Cys-921, Cys-1060/Cys-1084, Cys-1071/Cys-1111, Cys-1089/Cys-1091, and Cys-1126/Cys-1130. The TIL 4 domain occupies 1146 to 1196; it reads YNSCAPACQVTCQHPEPLACPVQCVEGCHAHCPPGKILDELLQTCVDPEDC. A glycan (N-linked (GlcNAc...) asparagine; atypical) is linked at Asn-1147. 3 cysteine pairs are disulfide-bonded: Cys-1149-Cys-1169, Cys-1153-Cys-1165, and Cys-1196-Cys-1199. A glycan (N-linked (GlcNAc...) asparagine) is linked at Asn-1231. Cysteines 1234 and 1237 form a disulfide. 3 O-linked (GalNAc...) threonine glycosylation sites follow: Thr-1248, Thr-1255, and Thr-1256. O-linked (GalNAc...) serine glycosylation occurs at Ser-1263. Cysteines 1272 and 1458 form a disulfide. Residues 1277 to 1453 form the VWFA 1; binding site for platelet glycoprotein Ib domain; that stretch reads DLVFLLDGSS…DELEQQRDEI (177 aa). Residues Thr-1468 and Thr-1477 are each glycosylated (O-linked (GalNAc...) threonine). Ser-1486 is a glycosylation site (O-linked (GalNAc...) serine). The O-linked (GalNAc...) threonine glycan is linked to Thr-1487. Positions 1498–1665 constitute a VWFA 2 domain; that stretch reads DVAFVLEGSD…TLPREAPDLV (168 aa). Asn-1515 carries N-linked (GlcNAc...) (complex) asparagine glycosylation. Asn-1574 carries N-linked (GlcNAc...) asparagine glycosylation. An intrachain disulfide couples Cys-1669 to Cys-1670. Thr-1679 carries an O-linked (GalNAc...) threonine glycan. 7 disulfide bridges follow: Cys-1686–Cys-1872, Cys-1879–Cys-1904, Cys-1899–Cys-1940, Cys-1927–Cys-2088, Cys-1950–Cys-2085, Cys-1972–Cys-2123, and Cys-1993–Cys-2001. The 181-residue stretch at 1691 to 1871 folds into the VWFA 3; main binding site for collagens type I and III domain; sequence DVILLLDGSS…TLGNSFLHKL (181 aa). A VWFD 4 domain is found at 1948-2124; it reads CVCTGSSTRH…TVQRPGQTCQ (177 aa). The tract at residues 2216-2261 is E2; the sequence is CPRHCDGNVSSCGDHPSEGCFCPPDKVMLEGSCVPEEACTQCIGED. Asn-2223 and Asn-2290 each carry an N-linked (GlcNAc...) asparagine glycan. Residues 2255-2328 form the VWFC 1 domain; that stretch reads TQCIGEDGVQ…CCPEYECVCD (74 aa). A glycan (O-linked (GalNAc...) threonine) is linked at Thr-2298. N-linked (GlcNAc...) asparagine glycosylation is found at Asn-2357 and Asn-2400. The VWFC 2 domain maps to 2429–2495; sequence KVCVHRSTIY…HEGECCGRCL (67 aa). The Cell attachment site signature appears at 2507–2509; the sequence is RGD. Residues Asn-2546 and Asn-2585 are each glycosylated (N-linked (GlcNAc...) asparagine). The 66-residue stretch at 2580 to 2645 folds into the VWFC 3 domain; the sequence is EACMLNGTVI…NTGECCGRCL (66 aa). Intrachain disulfides connect Cys-2724–Cys-2774, Cys-2739–Cys-2788, Cys-2750–Cys-2804, and Cys-2754–Cys-2806. The 89-residue stretch at 2724 to 2812 folds into the CTCK domain; that stretch reads CNDITARLQY…ECKCSPRKCS (89 aa). The N-linked (GlcNAc...) asparagine glycan is linked to Asn-2790.

In terms of assembly, multimeric. Interacts with F8. All cysteine residues are involved in intrachain or interchain disulfide bonds. Post-translationally, N- and O-glycosylated. In terms of tissue distribution, plasma.

The protein localises to the secreted. It is found in the extracellular space. The protein resides in the extracellular matrix. Its function is as follows. Important in the maintenance of hemostasis, it promotes adhesion of platelets to the sites of vascular injury by forming a molecular bridge between sub-endothelial collagen matrix and platelet-surface receptor complex GPIb-IX-V. Also acts as a chaperone for coagulation factor VIII, delivering it to the site of injury, stabilizing its heterodimeric structure and protecting it from premature clearance from plasma. The polypeptide is von Willebrand factor (VWF) (Homo sapiens (Human)).